The sequence spans 256 residues: Imidazole glycerol phosphate synthase subunit HisF (256 aa).

Active-site residues include Asp-11 and Asp-130.

Belongs to the HisA/HisF family. Heterodimer of HisH and HisF.

It is found in the cytoplasm. It carries out the reaction 5-[(5-phospho-1-deoxy-D-ribulos-1-ylimino)methylamino]-1-(5-phospho-beta-D-ribosyl)imidazole-4-carboxamide + L-glutamine = D-erythro-1-(imidazol-4-yl)glycerol 3-phosphate + 5-amino-1-(5-phospho-beta-D-ribosyl)imidazole-4-carboxamide + L-glutamate + H(+). The protein operates within amino-acid biosynthesis; L-histidine biosynthesis; L-histidine from 5-phospho-alpha-D-ribose 1-diphosphate: step 5/9. Functionally, IGPS catalyzes the conversion of PRFAR and glutamine to IGP, AICAR and glutamate. The HisF subunit catalyzes the cyclization activity that produces IGP and AICAR from PRFAR using the ammonia provided by the HisH subunit. This Prochlorococcus marinus (strain MIT 9312) protein is Imidazole glycerol phosphate synthase subunit HisF.